A 300-amino-acid polypeptide reads, in one-letter code: Ribosomal protein bS6--L-glutamate ligase (300 aa).

An ATP-grasp domain is found at 104–287 (MQLLARQGID…IAGKMIRWIE (184 aa)). Residues Lys141, 178-179 (EY), Asp187, and 211-213 (RSN) contribute to the ATP site. Residues Asp248, Glu260, and Asn262 each contribute to the Mg(2+) site. Mn(2+) contacts are provided by Asp248, Glu260, and Asn262.

This sequence belongs to the RimK family. It depends on Mg(2+) as a cofactor. Requires Mn(2+) as cofactor.

In terms of biological role, an L-glutamate ligase that catalyzes the ATP-dependent post-translational addition of glutamate residues to the C-terminus of ribosomal protein bS6 (RpsF). Is also able to catalyze the synthesis of poly-alpha-glutamate in vitro, via ATP hydrolysis from unprotected glutamate as substrate. The number of glutamate residues added to either RpsF or to poly-alpha-glutamate changes with pH. This chain is Ribosomal protein bS6--L-glutamate ligase, found in Shigella boydii serotype 4 (strain Sb227).